Reading from the N-terminus, the 559-residue chain is MSSEVIRGTAEMVLAELYVSDREGNDATGDGTKEKPFKTGLKALMTVGKEPFPTIYVDSQKENERWDVISKSQMKNIKKMWHREQMKNDSREKKEAEDNLRREKNLEEAKKIIIKNDPSLPEPACVKISALEGYRGQRVKVFGWVHRLRRQGKNLMFLVLRDGTGYLQCVLSDDLCQCYNGVVLSTESSVAVYGTLNLTPKGKQAPGGHELSCDFWELVGLAPAGGADNLINEESDVDVQLNNRHMMIRGENMSKILKARSMITRCFRDHFFDRGYCEVTTPTLVQTQVEGGATLFKLDYFGEEAFLTQSSQLYLETCLPALGDVFCIAQSYRAEQSRTRRHLAEFTHVEAECPFLTFEDLLNRLEDLVCDVVDRVLKSPVASIVYELNPNFKPPKRPFRRMNYSDAIEWLKEHDVKKEDGTFYEFGDDIPEAPERLMTDTINEPILLCRFPVEIKSFYMQRCPEDPRLTESVDVLMPNVGEIVGGSMRSWDSEEILEGYKREGIDPAPYYWYTDQRKYGTCPHGGYGLGLERFLSWILNRYHIRDVCLYPRFLQRCRP.

A Phosphoserine modification is found at serine 72. The disordered stretch occupies residues histidine 82–arginine 102. Lysine 255 bears the N6-acetyllysine mark. A Phosphoserine modification is found at serine 493. The residue at position 501 (lysine 501) is an N6-acetyllysine.

Belongs to the class-II aminoacyl-tRNA synthetase family. Homodimer.

Its subcellular location is the cytoplasm. The enzyme catalyses tRNA(Asn) + L-asparagine + ATP = L-asparaginyl-tRNA(Asn) + AMP + diphosphate + H(+). In terms of biological role, catalyzes the attachment of asparagine to tRNA(Asn) in a two-step reaction: asparagine is first activated by ATP to form Asn-AMP and then transferred to the acceptor end of tRNA(Asn). In addition to its essential role in protein synthesis, acts as a signaling molecule that induced migration of CCR3-expressing cells. Has an essential role in the development of the cerebral cortex, being required for proper proliferation of radial glial cells. This Mus musculus (Mouse) protein is Asparagine--tRNA ligase, cytoplasmic.